The sequence spans 163 residues: RRM-domain-containing protein ECU01_0840 (163 aa).

Residues 84–163 (CSVKLSNLPL…SLGLSAEIAR (80 aa)) form the RRM domain.

The polypeptide is RRM-domain-containing protein ECU01_0840 (Encephalitozoon cuniculi (strain GB-M1) (Microsporidian parasite)).